The chain runs to 437 residues: Enolase (437 aa).

Substrate contacts are provided by His160 and Glu169. Glu212 functions as the Proton donor in the catalytic mechanism. The Mg(2+) site is built by Asp247, Glu296, and Asp321. Residues Glu296 and Asp321 each coordinate substrate. The active-site Proton acceptor is the Lys346. Residues 373-376 and Lys397 each bind substrate; that span reads SHRS.

This sequence belongs to the enolase family. Homodimer. The cofactor is Mg(2+).

The protein localises to the cytoplasm. It carries out the reaction (2R)-2-phosphoglycerate = phosphoenolpyruvate + H2O. It participates in carbohydrate degradation; glycolysis; pyruvate from D-glyceraldehyde 3-phosphate: step 4/5. This Eremothecium gossypii (strain ATCC 10895 / CBS 109.51 / FGSC 9923 / NRRL Y-1056) (Yeast) protein is Enolase (ENO).